The chain runs to 565 residues: MNVIDHVRDMAAAGLHSNVRLLSSLLLTMSNNNPELFSPPQKYQLLVYHADSLFHDKEYRNAVSKYTMALQQKKALSKTSKVRPSTGNSASTPQSQCLPSEIEVKYKMAECYTMLKQDKDAIAILDGIPSRQRTPKINMMLANLYKKAGQERPSVTSYKEVLRQCPLALDAILGLLSLSVKGAEVASMTMNVIQTVPNLDWLSVWIKAYAFVHTGDNSRAISTICSLEKKSLLRDNVDLLGSLADLYFRAGDNKNSVLKFEQAQMLDPYLIKGMDVYGYLLAREGRLEDVENLGCRLFNISDQHAEPWVVSGCHSFYSKRYSRALYLGAKAIQLNSNSVQALLLKGAALRNMGRVQEAIIHFREAIRLAPCRLDCYEGLIECYLASNSIREAMVMANNVYKTLGANAQTLTLLATVCLEDPVTQEKAKTLLDKALTQRPDYIKAVVKKAELLSREQKYEDGIALLRNALANQSDCVLHRILGDFLVAVNEYQEAMDQYSIALSLDPNDQKSLEGMQKMEKEESPTDATQEEDVDDMEGSGEEGDLEGSDSEAAQWADQEQWFGMQ.

TPR repeat units lie at residues 101–134, 169–202, 203–236, 237–270, 339–372, 373–406, 407–441, 442–474, 475–508, and 509–531; these read EIEV…RQRT, LDAI…LDWL, SVWI…LRDN, VDLL…DPYL, VQAL…APCR, LDCY…LGAN, AQTL…RPDY, IKAV…NQSD, CVLH…DPND, and QKSL…TQEE. Position 229 is an N6-acetyllysine (Lys229). A compositionally biased stretch (basic and acidic residues) spans 513–523; that stretch reads EGMQKMEKEES. A disordered region spans residues 513-565; sequence EGMQKMEKEESPTDATQEEDVDDMEGSGEEGDLEGSDSEAAQWADQEQWFGMQ. Residues 528-549 show a composition bias toward acidic residues; that stretch reads TQEEDVDDMEGSGEEGDLEGSD.

This sequence belongs to the APC7 family. V-shaped homodimer. The mammalian APC/C is composed at least of 14 distinct subunits ANAPC1, ANAPC2, CDC27/APC3, ANAPC4, ANAPC5, CDC16/APC6, ANAPC7, CDC23/APC8, ANAPC10, ANAPC11, CDC26/APC12, ANAPC13, ANAPC15 and ANAPC16 that assemble into a complex of at least 19 chains with a combined molecular mass of around 1.2 MDa; APC/C interacts with FZR1 and FBXO5.

It is found in the cytoplasm. The protein localises to the cytoskeleton. The protein resides in the nucleus. Its subcellular location is the spindle. It participates in protein modification; protein ubiquitination. Functionally, component of the anaphase promoting complex/cyclosome (APC/C), a cell cycle-regulated E3 ubiquitin ligase that controls progression through mitosis and the G1 phase of the cell cycle. The APC/C complex acts by mediating ubiquitination and subsequent degradation of target proteins: it mainly mediates the formation of 'Lys-11'-linked polyubiquitin chains and, to a lower extent, the formation of 'Lys-48'- and 'Lys-63'-linked polyubiquitin chains. The APC/C complex catalyzes assembly of branched 'Lys-11'-/'Lys-48'-linked branched ubiquitin chains on target proteins. APC7 is not required for the assembly of the APC/C complex, but has an enzyme-substrate adapter activity mediating the processive ubiquitination of specific substrates. Involved in brain development through the specific ubiquitination and clearance of MKI67 from constitutive heterochromatin after neuronal progenitors exit mitosis. In Homo sapiens (Human), this protein is Anaphase-promoting complex subunit 7.